The primary structure comprises 250 residues: 3-deoxy-manno-octulosonate cytidylyltransferase (250 aa).

The protein belongs to the KdsB family.

It localises to the cytoplasm. The enzyme catalyses 3-deoxy-alpha-D-manno-oct-2-ulosonate + CTP = CMP-3-deoxy-beta-D-manno-octulosonate + diphosphate. It participates in nucleotide-sugar biosynthesis; CMP-3-deoxy-D-manno-octulosonate biosynthesis; CMP-3-deoxy-D-manno-octulosonate from 3-deoxy-D-manno-octulosonate and CTP: step 1/1. It functions in the pathway bacterial outer membrane biogenesis; lipopolysaccharide biosynthesis. Functionally, activates KDO (a required 8-carbon sugar) for incorporation into bacterial lipopolysaccharide in Gram-negative bacteria. The protein is 3-deoxy-manno-octulosonate cytidylyltransferase of Legionella pneumophila (strain Lens).